A 115-amino-acid chain; its full sequence is Guanylin (115 aa).

An N-terminal signal peptide occupies residues 1–23; it reads MNAWLLSVLCLLGALAVLVEGVT. The propeptide occupies 24-100; that stretch reads VQDGDLSFPL…LQRLEAIAQD (77 aa). Disulfide bonds link cysteine 69/cysteine 82, cysteine 104/cysteine 112, and cysteine 107/cysteine 115.

Belongs to the guanylin family. As to expression, intestine and in low abundance in adrenal gland, kidney, and uterus/oviduct.

The protein resides in the secreted. Functionally, endogenous activator of intestinal guanylate cyclase. It stimulates this enzyme through the same receptor binding region as the heat-stable enterotoxins. The polypeptide is Guanylin (Guca2a) (Rattus norvegicus (Rat)).